The sequence spans 95 residues: Aspartyl/glutamyl-tRNA(Asn/Gln) amidotransferase subunit C (95 aa).

This sequence belongs to the GatC family. In terms of assembly, heterotrimer of A, B and C subunits.

It carries out the reaction L-glutamyl-tRNA(Gln) + L-glutamine + ATP + H2O = L-glutaminyl-tRNA(Gln) + L-glutamate + ADP + phosphate + H(+). The catalysed reaction is L-aspartyl-tRNA(Asn) + L-glutamine + ATP + H2O = L-asparaginyl-tRNA(Asn) + L-glutamate + ADP + phosphate + 2 H(+). Its function is as follows. Allows the formation of correctly charged Asn-tRNA(Asn) or Gln-tRNA(Gln) through the transamidation of misacylated Asp-tRNA(Asn) or Glu-tRNA(Gln) in organisms which lack either or both of asparaginyl-tRNA or glutaminyl-tRNA synthetases. The reaction takes place in the presence of glutamine and ATP through an activated phospho-Asp-tRNA(Asn) or phospho-Glu-tRNA(Gln). This Methylobacterium nodulans (strain LMG 21967 / CNCM I-2342 / ORS 2060) protein is Aspartyl/glutamyl-tRNA(Asn/Gln) amidotransferase subunit C.